A 158-amino-acid chain; its full sequence is Aspartate carbamoyltransferase regulatory chain (158 aa).

Residues Cys-111, Cys-116, Cys-140, and Cys-143 each contribute to the Zn(2+) site.

This sequence belongs to the PyrI family. As to quaternary structure, contains catalytic and regulatory chains. It depends on Zn(2+) as a cofactor.

Its function is as follows. Involved in allosteric regulation of aspartate carbamoyltransferase. The protein is Aspartate carbamoyltransferase regulatory chain of Metallosphaera sedula (strain ATCC 51363 / DSM 5348 / JCM 9185 / NBRC 15509 / TH2).